We begin with the raw amino-acid sequence, 160 residues long: Probable chemoreceptor glutamine deamidase CheD (160 aa).

It belongs to the CheD family.

The enzyme catalyses L-glutaminyl-[protein] + H2O = L-glutamyl-[protein] + NH4(+). Probably deamidates glutamine residues to glutamate on methyl-accepting chemotaxis receptors (MCPs), playing an important role in chemotaxis. The sequence is that of Probable chemoreceptor glutamine deamidase CheD from Desulfitobacterium hafniense (strain DSM 10664 / DCB-2).